A 116-amino-acid polypeptide reads, in one-letter code: Large ribosomal subunit protein bL19 (116 aa).

The protein belongs to the bacterial ribosomal protein bL19 family.

In terms of biological role, this protein is located at the 30S-50S ribosomal subunit interface and may play a role in the structure and function of the aminoacyl-tRNA binding site. The polypeptide is Large ribosomal subunit protein bL19 (Chloroflexus aggregans (strain MD-66 / DSM 9485)).